The primary structure comprises 122 residues: Acidic phospholipase A2 1 (122 aa).

Disulfide bonds link Cys26–Cys115, Cys28–Cys44, Cys43–Cys94, Cys49–Cys122, Cys50–Cys87, Cys57–Cys81, and Cys75–Cys85. 3 residues coordinate Ca(2+): Tyr27, Gly29, and Gly31. The active site involves His47. Asp48 is a binding site for Ca(2+). Asp88 is a catalytic residue.

Belongs to the phospholipase A2 family. Group II subfamily. D49 sub-subfamily. Homodimer. The cofactor is Ca(2+). In terms of tissue distribution, expressed by the venom gland.

It is found in the secreted. It catalyses the reaction a 1,2-diacyl-sn-glycero-3-phosphocholine + H2O = a 1-acyl-sn-glycero-3-phosphocholine + a fatty acid + H(+). Its function is as follows. PLA2 catalyzes the calcium-dependent hydrolysis of the 2-acyl groups in 3-sn-phosphoglycerides. This is Acidic phospholipase A2 1 from Protobothrops mucrosquamatus (Taiwan habu).